Here is a 284-residue protein sequence, read N- to C-terminus: 4-diphosphocytidyl-2-C-methyl-D-erythritol kinase (284 aa).

Lys-14 is a catalytic residue. 98 to 108 contacts ATP; the sequence is PMGGGLGGGSS. Asp-140 is a catalytic residue.

Belongs to the GHMP kinase family. IspE subfamily.

The enzyme catalyses 4-CDP-2-C-methyl-D-erythritol + ATP = 4-CDP-2-C-methyl-D-erythritol 2-phosphate + ADP + H(+). Its pathway is isoprenoid biosynthesis; isopentenyl diphosphate biosynthesis via DXP pathway; isopentenyl diphosphate from 1-deoxy-D-xylulose 5-phosphate: step 3/6. Functionally, catalyzes the phosphorylation of the position 2 hydroxy group of 4-diphosphocytidyl-2C-methyl-D-erythritol. The chain is 4-diphosphocytidyl-2-C-methyl-D-erythritol kinase from Shewanella baltica (strain OS195).